The sequence spans 428 residues: Enolase (428 aa).

Gln163 serves as a coordination point for (2R)-2-phosphoglycerate. Glu205 serves as the catalytic Proton donor. Mg(2+) is bound by residues Asp242, Glu285, and Asp312. The (2R)-2-phosphoglycerate site is built by Lys337, Arg366, Ser367, and Lys388. Lys337 serves as the catalytic Proton acceptor.

This sequence belongs to the enolase family. It depends on Mg(2+) as a cofactor.

The protein localises to the cytoplasm. The protein resides in the secreted. Its subcellular location is the cell surface. The catalysed reaction is (2R)-2-phosphoglycerate = phosphoenolpyruvate + H2O. It participates in carbohydrate degradation; glycolysis; pyruvate from D-glyceraldehyde 3-phosphate: step 4/5. Catalyzes the reversible conversion of 2-phosphoglycerate (2-PG) into phosphoenolpyruvate (PEP). It is essential for the degradation of carbohydrates via glycolysis. The protein is Enolase of Neisseria meningitidis serogroup C / serotype 2a (strain ATCC 700532 / DSM 15464 / FAM18).